The primary structure comprises 446 residues: Histidine--tRNA ligase (446 aa).

This sequence belongs to the class-II aminoacyl-tRNA synthetase family. Homodimer.

It is found in the cytoplasm. The enzyme catalyses tRNA(His) + L-histidine + ATP = L-histidyl-tRNA(His) + AMP + diphosphate + H(+). The chain is Histidine--tRNA ligase from Burkholderia pseudomallei (strain 668).